Here is a 507-residue protein sequence, read N- to C-terminus: ATP synthase subunit alpha, chloroplastic (507 aa).

170–177 (GDRQTGKT) contacts ATP. Position 383 is a phosphoserine (Ser-383).

The protein belongs to the ATPase alpha/beta chains family. As to quaternary structure, F-type ATPases have 2 components, CF(1) - the catalytic core - and CF(0) - the membrane proton channel. CF(1) has five subunits: alpha(3), beta(3), gamma(1), delta(1), epsilon(1). CF(0) has four main subunits: a, b, b' and c. Post-translationally, only phosphorylated in mesophyll cells, and only when cells are grown under high rather than low light regimes (70 vs 900 umol photons/m-2/s).

It is found in the plastid. It localises to the chloroplast thylakoid membrane. The catalysed reaction is ATP + H2O + 4 H(+)(in) = ADP + phosphate + 5 H(+)(out). Produces ATP from ADP in the presence of a proton gradient across the membrane. The alpha chain is a regulatory subunit. The polypeptide is ATP synthase subunit alpha, chloroplastic (Zea mays (Maize)).